The chain runs to 137 residues: Protein apnoia (137 aa).

The next 3 membrane-spanning stretches (helical) occupy residues Ile7 to Ala27, Leu55 to Val75, and Ser76 to Ser96.

As to quaternary structure, interacts with crb.

The protein localises to the apical cell membrane. In terms of biological role, transmembrane protein that plays a key role in trachea development by regulating crb localization and maintenance at the apical cell membrane. Required for anisotropic apical surface expansion important for tracheal tube elongation and lumen stability at larval stages. This Drosophila melanogaster (Fruit fly) protein is Protein apnoia.